The chain runs to 145 residues: MNKIERQQQIKQLIQAEHIGTQEEIRRLLQKDGIVVTQATLSRDLREIGLLKLRDDRGKLYYSLSEPVATPFSPDVRFYVLKVDRAGFMLVLHTNLGEADVLANLIDNDAIEDVLGTIAGADTLLVICRDEEIAKRFEKDLAAGL.

It belongs to the ArgR family.

It localises to the cytoplasm. Its pathway is amino-acid biosynthesis; L-arginine biosynthesis [regulation]. In terms of biological role, regulates arginine biosynthesis genes. The protein is Arginine repressor of Streptococcus equi subsp. zooepidemicus (strain H70).